Consider the following 169-residue polypeptide: Large ribosomal subunit protein uL10 (169 aa).

The protein belongs to the universal ribosomal protein uL10 family. As to quaternary structure, part of the ribosomal stalk of the 50S ribosomal subunit. The N-terminus interacts with L11 and the large rRNA to form the base of the stalk. The C-terminus forms an elongated spine to which L12 dimers bind in a sequential fashion forming a multimeric L10(L12)X complex.

Functionally, forms part of the ribosomal stalk, playing a central role in the interaction of the ribosome with GTP-bound translation factors. The chain is Large ribosomal subunit protein uL10 from Lactobacillus delbrueckii subsp. bulgaricus (strain ATCC 11842 / DSM 20081 / BCRC 10696 / JCM 1002 / NBRC 13953 / NCIMB 11778 / NCTC 12712 / WDCM 00102 / Lb 14).